The chain runs to 105 residues: ATP synthase subunit c (105 aa).

2 helical membrane-spanning segments follow: residues 37-57 (IGAG…GYIF) and 82-102 (SAIS…LIFV).

It belongs to the ATPase C chain family. In terms of assembly, F-type ATPases have 2 components, F(1) - the catalytic core - and F(0) - the membrane proton channel. F(1) has five subunits: alpha(3), beta(3), gamma(1), delta(1), epsilon(1). F(0) has three main subunits: a(1), b(2) and c(10-14). The alpha and beta chains form an alternating ring which encloses part of the gamma chain. F(1) is attached to F(0) by a central stalk formed by the gamma and epsilon chains, while a peripheral stalk is formed by the delta and b chains.

Its subcellular location is the cell membrane. Its function is as follows. F(1)F(0) ATP synthase produces ATP from ADP in the presence of a proton or sodium gradient. F-type ATPases consist of two structural domains, F(1) containing the extramembraneous catalytic core and F(0) containing the membrane proton channel, linked together by a central stalk and a peripheral stalk. During catalysis, ATP synthesis in the catalytic domain of F(1) is coupled via a rotary mechanism of the central stalk subunits to proton translocation. Key component of the F(0) channel; it plays a direct role in translocation across the membrane. A homomeric c-ring of between 10-14 subunits forms the central stalk rotor element with the F(1) delta and epsilon subunits. The sequence is that of ATP synthase subunit c from Mycoplasma pneumoniae (strain ATCC 29342 / M129 / Subtype 1) (Mycoplasmoides pneumoniae).